Reading from the N-terminus, the 504-residue chain is Multidrug efflux pump LfrA (504 aa).

14 consecutive transmembrane segments (helical) span residues 19–39, 58–78, 87–107, 110–130, 145–165, 172–192, 206–226, 233–253, 275–295, 309–329, 338–358, 361–381, 408–428, and 480–500; these read WVAL…NTVL, LWIV…MGSL, LLLI…FAPS, LLVG…PSTL, LAIA…PIVG, FHWG…LVLG, PFDP…VWAV, GLSA…ALFV, TSSI…IFFI, TAGL…LAVV, DTLM…ILLF, NLTV…VGVS, AYEL…TAFY, and IAPT…VVGV.

The protein belongs to the major facilitator superfamily.

The protein resides in the cell inner membrane. With respect to regulation, inhibited by the protonophore carbonyl cyanide m-chorophenylhydrazone (CCCP). Ethidium bromide efflux is inhibited by chlorpromazine, thioridazine and verapamil. Functionally, energy-dependent efflux pump that contributes to drug resistance. Catalyzes the efflux of norfloxacin and several related fluoroquinolones (FQ). Contributes significantly to the intrinsic MICs for ethidium bromide and acriflavine. Overexpression confers low-level resistance to hydrophilic FQ such as ciprofloxacin, ofloxacin and levofloxacin, and to ethidium bromide, acridine, acriflavine, rhodamine 123 and some quaternary ammonium compounds. May contribute to resistance to certain beta-lactams. Probably uses the proton motive force to export drugs. The sequence is that of Multidrug efflux pump LfrA from Mycolicibacterium smegmatis (strain ATCC 700084 / mc(2)155) (Mycobacterium smegmatis).